Here is a 355-residue protein sequence, read N- to C-terminus: Inositol-tetrakisphosphate 1-kinase 4 (355 aa).

Lysine 65 is a 1D-myo-inositol 1,3,4-trisphosphate binding site. Residues arginine 101 and lysine 146 each coordinate ATP. An ATP-grasp domain is found at 107–318; the sequence is VVSGLRTPVS…FFLEMLRGTR (212 aa). Histidine 157 and lysine 190 together coordinate 1D-myo-inositol 1,3,4-trisphosphate. ATP-binding positions include 179 to 190 and serine 205; that span reads QEFVNHGGVLFK. A disordered region spans residues 225–248; it reads FANISNQPLPPPDDDGGAADDDTP. Residues 236-247 are compositionally biased toward acidic residues; it reads PDDDGGAADDDT. Mg(2+)-binding residues include aspartate 272, aspartate 289, and asparagine 291. Asparagine 291 contributes to the 1D-myo-inositol 1,3,4-trisphosphate binding site.

It belongs to the ITPK1 family. In terms of assembly, monomer. Requires Mg(2+) as cofactor.

It catalyses the reaction 1D-myo-inositol 3,4,5,6-tetrakisphosphate + ATP = 1D-myo-inositol 1,3,4,5,6-pentakisphosphate + ADP + H(+). The enzyme catalyses 1D-myo-inositol 1,3,4-trisphosphate + ATP = 1D-myo-inositol 1,3,4,5-tetrakisphosphate + ADP + H(+). It carries out the reaction 1D-myo-inositol 1,3,4-trisphosphate + ATP = 1D-myo-inositol 1,3,4,6-tetrakisphosphate + ADP + H(+). Functionally, kinase that can phosphorylate various inositol polyphosphate such as Ins(3,4,5,6)P4 or Ins(1,3,4)P3 and participates in phytic acid biosynthesis in developing seeds. Phytic acid is the primary storage form of phosphorus in cereal grains and other plant seeds. This chain is Inositol-tetrakisphosphate 1-kinase 4 (ITPK4), found in Oryza sativa subsp. indica (Rice).